The chain runs to 397 residues: Teichoic acid D-alanine hydrolase (397 aa).

Residues 1 to 23 (MKFNKVKLVIHACVLLFIIISIA) form the signal peptide.

The protein localises to the cell membrane. It carries out the reaction [(4-D-Ala)-(2-GlcNAc)-Rib-ol-P]n-[Gro-P]m-beta-D-ManNAc-(1-&gt;4)-alpha-D-GlcNAc-P-peptidoglycan + n H2O = [(2-GlcNAc)-Rib-ol-P]n-[Gro-P]m-beta-D-ManNAc-(1-&gt;4)-alpha-D-GlcNAc-P-peptidoglycan + n D-alanine.. Its function is as follows. Catalyzes the liberation of D-alanyl moieties present on wall teichoic acid (WTA) and lipoteichoic acid (LTA). Affects the methicillin resistance level and autolysis in the presence of Triton X-100 as well as the cell wall structure. The sequence is that of Teichoic acid D-alanine hydrolase (fmtA) from Staphylococcus aureus (strain NCTC 8325 / PS 47).